Reading from the N-terminus, the 312-residue chain is Flavonol 3-sulfotransferase (312 aa).

59–64 (KSGTTW) is a binding site for 3'-phosphoadenylyl sulfate. His119 serves as the catalytic Proton acceptor. 3'-phosphoadenylyl sulfate-binding positions include Arg141, Ser149, Tyr207, and 277 to 279 (RKG).

Belongs to the sulfotransferase 1 family. In terms of tissue distribution, highest in shoot tips and lowest in mature leaves and roots.

It localises to the cytoplasm. Functionally, sulfotransferase that utilizes 3'-phospho-5'-adenylyl sulfate (PAPS) as sulfonate donor to catalyze the sulfate conjugation of quercetin, rhamnetin and isorhamnetin but not kaempferol. O-sulfation of position 3 of flavonol. May play a role in auxin transport. The polypeptide is Flavonol 3-sulfotransferase (Flaveria bidentis (Coastal plain yellowtops)).